The sequence spans 374 residues: Putative F-box protein At3g16590 (374 aa).

The F-box domain maps to 1–45; it reads MPTKLPLELEDEILLRVPPLSLTRFRTVCKRWNTLFNDQRFINNH.

The chain is Putative F-box protein At3g16590 from Arabidopsis thaliana (Mouse-ear cress).